A 110-amino-acid polypeptide reads, in one-letter code: Large ribosomal subunit protein uL22 (110 aa).

It belongs to the universal ribosomal protein uL22 family. In terms of assembly, part of the 50S ribosomal subunit.

This protein binds specifically to 23S rRNA; its binding is stimulated by other ribosomal proteins, e.g. L4, L17, and L20. It is important during the early stages of 50S assembly. It makes multiple contacts with different domains of the 23S rRNA in the assembled 50S subunit and ribosome. In terms of biological role, the globular domain of the protein is located near the polypeptide exit tunnel on the outside of the subunit, while an extended beta-hairpin is found that lines the wall of the exit tunnel in the center of the 70S ribosome. This chain is Large ribosomal subunit protein uL22, found in Oleidesulfovibrio alaskensis (strain ATCC BAA-1058 / DSM 17464 / G20) (Desulfovibrio alaskensis).